A 40-amino-acid chain; its full sequence is Proteinase inhibitor IIB (40 aa).

Cystine bridges form between C2-C16, C6-C28, and C12-C38.

It belongs to the protease inhibitor I20 (potato type II proteinase inhibitor) family.

It is found in the secreted. Its function is as follows. Inhibits chymotrypsin and subtilisin strongly. The chain is Proteinase inhibitor IIB from Solanum tuberosum (Potato).